The sequence spans 146 residues: UPF0260 protein Sbal_1871 (146 aa).

Belongs to the UPF0260 family.

This chain is UPF0260 protein Sbal_1871, found in Shewanella baltica (strain OS155 / ATCC BAA-1091).